We begin with the raw amino-acid sequence, 966 residues long: Insulin-degrading enzyme-like 2 (966 aa).

His-71 lines the Zn(2+) pocket. The active-site Proton acceptor is the Glu-74. His-75 lines the Zn(2+) pocket. Residue Glu-145 is part of the active site. Glu-152 lines the Zn(2+) pocket.

It belongs to the peptidase M16 family. Requires Zn(2+) as cofactor.

This chain is Insulin-degrading enzyme-like 2, found in Arabidopsis thaliana (Mouse-ear cress).